Reading from the N-terminus, the 757-residue chain is Inhibitor of nuclear factor kappa-B kinase subunit beta (757 aa).

The region spanning 15 to 300 (WEMKERLGTG…DPQYGPNGCF (286 aa)) is the Protein kinase domain. ATP-binding positions include 21–29 (LGTGGFGNV) and lysine 44. Aspartate 145 acts as the Proton acceptor in catalysis. A Glycyl lysine isopeptide (Lys-Gly) (interchain with G-Cter in ubiquitin) cross-link involves residue lysine 163. Serine 177 is modified (phosphoserine; by TBK1 and PKC/PRKCZ). Cysteine 179 bears the S-nitrosocysteine mark. Phosphoserine; by TBK1, PKC/PRKCZ and PDPK1 is present on serine 181. Proline 191 is modified (hydroxyproline). Positions 458–479 (LLRNNSCLSKMKNAMASTAQQL) are leucine-zipper. A Phosphoserine; by autocatalysis modification is found at serine 670. The residue at position 672 (serine 672) is a Phosphoserine. 8 positions are modified to phosphoserine; by autocatalysis: serine 675, serine 682, serine 689, serine 692, serine 697, serine 705, serine 733, and serine 740. Positions 682–703 (SHPGHLMSQPSSACDSLPDSDK) are disordered. The NEMO-binding stretch occupies residues 737–742 (LDWSWL).

The protein belongs to the protein kinase superfamily. Ser/Thr protein kinase family. I-kappa-B kinase subfamily. In terms of assembly, component of the I-kappa-B-kinase (IKK) core complex consisting of CHUK, IKBKB and IKBKG; probably four alpha/CHUK-beta/IKBKB dimers are associated with four gamma/IKBKG subunits. The IKK core complex seems to associate with regulatory or adapter proteins to form a IKK-signalosome holo-complex. The IKK complex associates with TERF2IP/RAP1, leading to promote IKK-mediated phosphorylation of RELA/p65. Part of a complex composed of NCOA2, NCOA3, CHUK/IKKA, IKBKB, IKBKG and CREBBP. Part of a 70-90 kDa complex at least consisting of CHUK/IKKA, IKBKB, NFKBIA, RELA, ELP1 and MAP3K14. Found in a membrane raft complex, at least composed of BCL10, CARD11, DPP4 and IKBKB. Interacts with SQSTM1 through PRKCZ or PRKCI. Forms an NGF-induced complex with IKBKB, PRKCI and TRAF6. May interact with MAVS/IPS1. Interacts with NALP2. Interacts with TICAM1. Interacts with FAF1; the interaction disrupts the IKK complex formation. Interacts with ATM. Part of a ternary complex consisting of TANK, IKBKB and IKBKG. Interacts with NIBP; the interaction is direct. Interacts with ARRB1 and ARRB2. Interacts with TRIM21. Interacts with NLRC5; prevents IKBKB phosphorylation and kinase activity. Interacts with PDPK1. Interacts with EIF2AK2/PKR. The phosphorylated form interacts with PPM1A and PPM1B. Interacts with ZNF268 isoform 2; the interaction is further increased in a TNF-alpha-dependent manner. Interacts with IKBKE. Interacts with ZC3H12A. Interacts with AKAP13. Interacts with LRRC14; disrupts IKBKB-IKBKG interaction preventing I-kappa-B-kinase (IKK) core complex formation and leading to a decrease of IKBKB phosphorylation and NF-kappaB activation. Interacts with SASH1. Interacts with ARFIP2. Interacts with FKBP5. Post-translationally, upon cytokine stimulation, phosphorylated on Ser-177 and Ser-181 by MEKK1 and/or MAP3K14/NIK as well as TBK1 and PRKCZ; which enhances activity. Phosphorylated by MAP3K7/TAK1 in response to NOD1 and NOD2 signaling, promoting activation and phosphorylation of NF-kappa-B inhibitors, leading to NF-kappa-B activation. Once activated, autophosphorylates on the C-terminal serine cluster; which decreases activity and prevents prolonged activation of the inflammatory response. Phosphorylated by the IKK-related kinases TBK1 and IKBKE, which is associated with reduced CHUK/IKKA and IKBKB activity and NF-kappa-B-dependent gene transcription. Dephosphorylated at Ser-177 and Ser-181 by PPM1A and PPM1B. Ubiquitinated. Monoubiquitination involves TRIM21 that leads to inhibition of Tax-induced NF-kappa-B signaling. 'Ser-163' may not serve as a monoubiquitination site. Ubiquitination on 'Ser-163' may modulate phosphorylation on C-terminal serine residues. In terms of processing, hydroxylated by PHD1/EGLN2, loss of hydroxylation under hypoxic conditions results in activation of NF-kappa-B.

Its subcellular location is the cytoplasm. The protein localises to the nucleus. The protein resides in the membrane raft. The enzyme catalyses L-seryl-[I-kappa-B protein] + ATP = O-phospho-L-seryl-[I-kappa-B protein] + ADP + H(+). It catalyses the reaction L-seryl-[protein] + ATP = O-phospho-L-seryl-[protein] + ADP + H(+). It carries out the reaction L-threonyl-[protein] + ATP = O-phospho-L-threonyl-[protein] + ADP + H(+). Serine kinase that plays an essential role in the NF-kappa-B signaling pathway which is activated by multiple stimuli such as inflammatory cytokines, bacterial or viral products, DNA damages or other cellular stresses. Acts as a part of the canonical IKK complex in the conventional pathway of NF-kappa-B activation. Phosphorylates inhibitors of NF-kappa-B on 2 critical serine residues. These modifications allow polyubiquitination of the inhibitors and subsequent degradation by the proteasome. In turn, free NF-kappa-B is translocated into the nucleus and activates the transcription of hundreds of genes involved in immune response, growth control, or protection against apoptosis. In addition to the NF-kappa-B inhibitors, phosphorylates several other components of the signaling pathway including NEMO/IKBKG, NF-kappa-B subunits RELA and NFKB1, as well as IKK-related kinases TBK1 and IKBKE. IKK-related kinase phosphorylations may prevent the overproduction of inflammatory mediators since they exert a negative regulation on canonical IKKs. Phosphorylates FOXO3, mediating the TNF-dependent inactivation of this pro-apoptotic transcription factor. Also phosphorylates other substrates including NAA10, NCOA3, BCL10 and IRS1. Phosphorylates RIPK1 at 'Ser-25' which represses its kinase activity and consequently prevents TNF-mediated RIPK1-dependent cell death. Phosphorylates the C-terminus of IRF5, stimulating IRF5 homodimerization and translocation into the nucleus. The polypeptide is Inhibitor of nuclear factor kappa-B kinase subunit beta (Ikbkb) (Rattus norvegicus (Rat)).